Consider the following 449-residue polypeptide: MFS-type transporter 1 (449 aa).

Positions 1–37 (MTHSSSNEHEKEDDRRASDDMMDRDDQNAKEEQDVSK) are enriched in basic and acidic residues. The interval 1–43 (MTHSSSNEHEKEDDRRASDDMMDRDDQNAKEEQDVSKDAPPVN) is disordered. 6 helical membrane passes run 61–81 (VAGGFCSLFCSFGWINCIGIF), 97–117 (TISWIASLELFILFAGGLVVG), 127–147 (YILLFGTFMHVFGLMMASLST), 152–172 (ILLSQGICSPIGISCLFTPAV), 185–205 (LANGIVAAGSSLGGVIFPIMF), and 212–232 (VGFPWAMRIGAFLILFLLIIA). An N-linked (GlcNAc...) asparagine glycan is attached at Asn233. 6 helical membrane-spanning segments follow: residues 262–282 (LLTTIAAMIFVLGLFLPINYI), 298–318 (YLIPILNAASLFGRTVPGFVA), 326–346 (VHTFMCFFSSVVAFALWLPAA), 349–369 (APIIVFAALYGFGSGAFVAIL), 390–410 (FGVLSLPALVSNPIGGAFVAH), and 420–440 (IWTGCITMLGAILFVVARISL).

It belongs to the major facilitator superfamily. Monocarboxylate porter (TC 2.A.1.13) family.

Its subcellular location is the cell membrane. The enzyme catalyses erythrostominone(in) = erythrostominone(out). The catalysed reaction is deoxyerythrostominone(in) = deoxyerythrostominone(out). It carries out the reaction epierythrostominol(in) = epierythrostominol(out). It catalyses the reaction deoxyerythrostominol(in) = deoxyerythrostominol(out). Functionally, MFS-type transporter that mediates the secretion of the 4 major naphthoquinone derivatives produced, erythrostominone (NQ1), deoxyerythrostominone (NQ2), epierythrostominol (NQ4), and deoxyerythrostominol (NQ5), as well as of 3 newly identified naphthoquinone derivatives termed NQ7, NQ8 and NQ9. This is MFS-type transporter 1 from Ophiocordyceps sp. (strain BCC 1869) (Entomopathogenic fungus).